A 174-amino-acid chain; its full sequence is Probable carboxylesterase Culp5 (174 aa).

Residue serine 67 is the Nucleophile of the active site. An intrachain disulfide couples cysteine 137 to cysteine 144. Residue aspartate 141 is part of the active site. The active-site Proton donor/acceptor is the histidine 153.

Belongs to the cutinase family.

Functionally, does not exhibit cutinase activity. This is Probable carboxylesterase Culp5 from Mycobacterium tuberculosis (strain ATCC 25618 / H37Rv).